A 376-amino-acid polypeptide reads, in one-letter code: MQSTSAQSSASHPERVFNFSAGPATMPESVLREVQDEMLCYPGAGASIMEISHRDKLFVDVLHDAESTIRELLNVSDDYSVMFMQGGATLQFSAIPANLLRGSGKRAQYVLTGSWGKKAVKEAKKEGDVDVLFDAAESNYDHIPSASDLACPDDAAYMYYCSNETIQGVQFPTEPNCPDSVPLVSDASSDFLCRPLPIEKYGLLYACAQKNAGPAGVSVVIMRKDLLDKADPNIPGYLHFKNHHDNDSEWNTPPTFAIYVLGKVARWLRDDMGGLEKMESINHEKSQQLYSVIDSSNGFYRGHAQTDCRSLMNVTFNLPSDELTAKFIAEAAEHKLAALKGHRSVGGIRASIYNAMPREGVNALASFMNNFASKNS.

Arg-54 provides a ligand contact to L-glutamate. Residues 88-89, Trp-115, Thr-165, Asp-186, and Gln-209 each bind pyridoxal 5'-phosphate; that span reads AT. The residue at position 210 (Lys-210) is an N6-(pyridoxal phosphate)lysine. 251-252 contributes to the pyridoxal 5'-phosphate binding site; it reads NT.

It belongs to the class-V pyridoxal-phosphate-dependent aminotransferase family. SerC subfamily. Homodimer. The cofactor is pyridoxal 5'-phosphate.

Its subcellular location is the cytoplasm. It carries out the reaction O-phospho-L-serine + 2-oxoglutarate = 3-phosphooxypyruvate + L-glutamate. The enzyme catalyses 4-(phosphooxy)-L-threonine + 2-oxoglutarate = (R)-3-hydroxy-2-oxo-4-phosphooxybutanoate + L-glutamate. It functions in the pathway amino-acid biosynthesis; L-serine biosynthesis; L-serine from 3-phospho-D-glycerate: step 2/3. It participates in cofactor biosynthesis; pyridoxine 5'-phosphate biosynthesis; pyridoxine 5'-phosphate from D-erythrose 4-phosphate: step 3/5. Its function is as follows. Catalyzes the reversible conversion of 3-phosphohydroxypyruvate to phosphoserine and of 3-hydroxy-2-oxo-4-phosphonooxybutanoate to phosphohydroxythreonine. The sequence is that of Phosphoserine aminotransferase from Rhodopirellula baltica (strain DSM 10527 / NCIMB 13988 / SH1).